A 714-amino-acid polypeptide reads, in one-letter code: DNA ligase (714 aa).

NAD(+) is bound by residues 48–52, 97–98, and Glu-129; these read DADYD and SL. The active-site N6-AMP-lysine intermediate is the Lys-131. Residues Arg-152, Glu-189, Lys-307, and Lys-331 each contribute to the NAD(+) site. Zn(2+)-binding residues include Cys-436, Cys-439, Cys-454, and Cys-460. The region spanning 637–714 is the BRCT domain; sequence KQDTAVAGKT…TEDEWLALIG (78 aa).

This sequence belongs to the NAD-dependent DNA ligase family. LigA subfamily. The cofactor is Mg(2+). It depends on Mn(2+) as a cofactor.

The catalysed reaction is NAD(+) + (deoxyribonucleotide)n-3'-hydroxyl + 5'-phospho-(deoxyribonucleotide)m = (deoxyribonucleotide)n+m + AMP + beta-nicotinamide D-nucleotide.. Its function is as follows. DNA ligase that catalyzes the formation of phosphodiester linkages between 5'-phosphoryl and 3'-hydroxyl groups in double-stranded DNA using NAD as a coenzyme and as the energy source for the reaction. It is essential for DNA replication and repair of damaged DNA. The polypeptide is DNA ligase (Rhodopseudomonas palustris (strain BisB5)).